A 705-amino-acid polypeptide reads, in one-letter code: Dynein axonemal intermediate chain 1 (705 aa).

Disordered regions lie at residues 1–44 and 122–169; these read MPSK…AVRP and AGSQ…DVPA. Phosphoserine occurs at positions 124 and 127. Residues 124 to 135 are compositionally biased toward polar residues; sequence SQESVKVVTSDT. Acidic residues predominate over residues 136-159; sequence EILEEEEEPKEGEGEGEGEAEGEA. WD repeat units follow at residues 386–426, 435–478, 543–583, 585–625, and 633–672; these read SSES…SQPC, KHTD…LVHI, AHNM…PMFI, DLNA…YEAI, and KKKN…RKMP.

It belongs to the dynein intermediate chain family. In terms of assembly, consists of at least two heavy chains and a number of intermediate and light chains. Interacts with BICD2. Interacts with CFAP45 and CFAP52. Interacts with CFAP53.

It is found in the cytoplasm. Its subcellular location is the cytoskeleton. The protein resides in the cilium axoneme. Its function is as follows. Part of the dynein complex of respiratory cilia. This is Dynein axonemal intermediate chain 1 (Dnai1) from Rattus norvegicus (Rat).